Here is a 104-residue protein sequence, read N- to C-terminus: Replication restart protein PriB (104 aa).

An SSB domain is found at 1-101; sequence MTNRLVLSGT…LHAEQIELID (101 aa).

The protein belongs to the PriB family. In terms of assembly, homodimer. Interacts with PriA and DnaT. Component of the replication restart primosome. Primosome assembly occurs via a 'hand-off' mechanism. PriA binds to replication forks, subsequently PriB then DnaT bind; DnaT then displaces ssDNA to generate the helicase loading substrate.

In terms of biological role, involved in the restart of stalled replication forks, which reloads the replicative helicase on sites other than the origin of replication; the PriA-PriB pathway is the major replication restart pathway. During primosome assembly it facilitates complex formation between PriA and DnaT on DNA; stabilizes PriA on DNA. Stimulates the DNA unwinding activity of PriA helicase. The protein is Replication restart protein PriB of Escherichia coli (strain ATCC 8739 / DSM 1576 / NBRC 3972 / NCIMB 8545 / WDCM 00012 / Crooks).